Here is a 348-residue protein sequence, read N- to C-terminus: Sulfate/thiosulfate import ATP-binding protein CysA (348 aa).

Residues 3 to 237 enclose the ABC transporter domain; it reads IEIRNITKSF…PATPFVCQFI (235 aa). Position 35 to 42 (35 to 42) interacts with ATP; that stretch reads GPSGCGKT.

Belongs to the ABC transporter superfamily. Sulfate/tungstate importer (TC 3.A.1.6) family. In terms of assembly, the complex is composed of two ATP-binding proteins (CysA), two transmembrane proteins (CysT and CysW) and a solute-binding protein (CysP).

The protein localises to the cell inner membrane. It carries out the reaction sulfate(out) + ATP + H2O = sulfate(in) + ADP + phosphate + H(+). It catalyses the reaction thiosulfate(out) + ATP + H2O = thiosulfate(in) + ADP + phosphate + H(+). In terms of biological role, part of the ABC transporter complex CysAWTP involved in sulfate/thiosulfate import. Responsible for energy coupling to the transport system. The chain is Sulfate/thiosulfate import ATP-binding protein CysA from Methylococcus capsulatus (strain ATCC 33009 / NCIMB 11132 / Bath).